The primary structure comprises 339 residues: Fructose-1,6-bisphosphatase class 1 (339 aa).

The Mg(2+) site is built by E94, D116, L118, and D119. Substrate is bound by residues 119–122 (DGSS), N210, and K276. Position 282 (E282) interacts with Mg(2+).

This sequence belongs to the FBPase class 1 family. Homotetramer. It depends on Mg(2+) as a cofactor.

The protein localises to the cytoplasm. It catalyses the reaction beta-D-fructose 1,6-bisphosphate + H2O = beta-D-fructose 6-phosphate + phosphate. Its pathway is carbohydrate biosynthesis; gluconeogenesis. This Burkholderia ambifaria (strain MC40-6) protein is Fructose-1,6-bisphosphatase class 1.